Here is a 62-residue protein sequence, read N- to C-terminus: Small ribosomal subunit protein eS27 (62 aa).

Residues cysteine 17, cysteine 20, cysteine 36, and cysteine 39 each contribute to the Zn(2+) site. The segment at 17–39 (CNDCENEQIIFGSASRKITCVVC) adopts a C4-type zinc-finger fold.

This sequence belongs to the eukaryotic ribosomal protein eS27 family. As to quaternary structure, part of the 30S ribosomal subunit. Requires Zn(2+) as cofactor.

This is Small ribosomal subunit protein eS27 from Methanosarcina barkeri (strain Fusaro / DSM 804).